The primary structure comprises 34 residues: Photosystem II reaction center protein T (34 aa).

The chain crosses the membrane as a helical span at residues Ala-3–Phe-23.

This sequence belongs to the PsbT family. As to quaternary structure, PSII is composed of 1 copy each of membrane proteins PsbA, PsbB, PsbC, PsbD, PsbE, PsbF, PsbH, PsbI, PsbJ, PsbK, PsbL, PsbM, PsbT, PsbY, PsbZ, Psb30/Ycf12, at least 3 peripheral proteins of the oxygen-evolving complex and a large number of cofactors. It forms dimeric complexes.

It localises to the plastid. The protein localises to the chloroplast thylakoid membrane. Found at the monomer-monomer interface of the photosystem II (PS II) dimer, plays a role in assembly and dimerization of PSII. PSII is a light-driven water plastoquinone oxidoreductase, using light energy to abstract electrons from H(2)O, generating a proton gradient subsequently used for ATP formation. The protein is Photosystem II reaction center protein T of Solanum bulbocastanum (Wild potato).